A 31-amino-acid polypeptide reads, in one-letter code: Protamine PTP4 (31 aa).

Residues 1–31 (MPRRRRASRRIRRRRRPRVSRRRRGGRRRRR) form a disordered region.

Testis.

It is found in the nucleus. Its subcellular location is the chromosome. In terms of biological role, protamines substitute for histones in the chromatin of sperm during the haploid phase of spermatogenesis. They compact sperm DNA into a highly condensed, stable and inactive complex. This Oncorhynchus mykiss (Rainbow trout) protein is Protamine PTP4.